A 33-amino-acid polypeptide reads, in one-letter code: Putative tumor antigen NA88-A (33 aa).

Expressed in testis and melanoma cell lines.

This chain is Putative tumor antigen NA88-A (VENTXP1), found in Homo sapiens (Human).